Here is a 382-residue protein sequence, read N- to C-terminus: Bestrophin-6 (382 aa).

4 helical membrane-spanning segments follow: residues 29-49, 68-88, 231-251, and 265-285; these read WKLI…VLAI, FINF…TTIV, LAYP…CAFA, and VIHY…MGWL.

It belongs to the anion channel-forming bestrophin (TC 1.A.46) family. Calcium-sensitive chloride channel subfamily.

The protein localises to the membrane. The chain is Bestrophin-6 (best-6) from Caenorhabditis elegans.